Reading from the N-terminus, the 130-residue chain is MIKSSSLRLRKRIKKQVTDGIAHIHASFNNTIVTISDRQGNTLGWATSGGSGFRGSRKSTPFAAQIAAERCAEIVQEYGVKNLEVMVKGPGPGRESAVRALNAAGFHIISIIDVTPIPHNGCRPAKKRRV.

It belongs to the universal ribosomal protein uS11 family. As to quaternary structure, part of the 30S ribosomal subunit. Interacts with proteins S7 and S18. Binds to IF-3.

Its function is as follows. Located on the platform of the 30S subunit, it bridges several disparate RNA helices of the 16S rRNA. Forms part of the Shine-Dalgarno cleft in the 70S ribosome. This chain is Small ribosomal subunit protein uS11, found in Blochmanniella floridana.